A 619-amino-acid chain; its full sequence is MLDSPLLSKIIEKPTALSVLKSVFGYQSFRKGQEEVINAALNGQDALVVMATGNGKSLCYQIPALCFDGLTLVISPLISLMKDQVDQLQANGIEADFLNSSQTLEQQQQVQNKLISGQLKLLYVSPEKVMTNSFFQLISYSKVCFIAIDEAHCISQWGHDFRPEYTQLGGLKASFPDAPIMALTATADYATQQDILRHLNLKNLHKYIGSFDRPNIRYTLEEKYKPMEQLTRFVLAQKGKSGIIYCNSRNKVERIAESLRNKGVSAAAYHAGMETAIRERVQQDFQRDNVQVVVATIAFGMGINKSNVRFVAHFDLPRSIESYYQETGRAGRDDLPAEAVLFYEPADYAWLQKILLEKPETPQRQIEQHKLEAIGEFAESQTCRRLVLLNYFGEHRQTPCNNCDICLDPPKKYDGLVDAQKVMSTIYRVGQCFGAHYVIAVLRGMHNQKIIERQHHKLSVYGIGKDKSKEHWQSVIRQLIHLGFVQQVISELNPTLQLTESAKVILKGEEPLELAMPRISAISKIAHNPQRQGVANYDKDLFARLRFLRKQIADKENIPPYIVFNDATLQEMAQYMPTSNIEMLQINGVGSIKLERFGQPFMALIQEHKAILANAQNND.

In terms of domain architecture, Helicase ATP-binding spans 37-205 (INAALNGQDA…LRHLNLKNLH (169 aa)). Residue 50 to 57 (MATGNGKS) participates in ATP binding. A DEAH box motif is present at residues 149 to 152 (DEAH). In terms of domain architecture, Helicase C-terminal spans 229–374 (QLTRFVLAQK…QIEQHKLEAI (146 aa)). The Zn(2+) site is built by Cys-383, Cys-400, Cys-403, and Cys-406. The region spanning 535 to 615 (ANYDKDLFAR…QEHKAILANA (81 aa)) is the HRDC domain.

Belongs to the helicase family. RecQ subfamily. Requires Mg(2+) as cofactor. The cofactor is Zn(2+).

It carries out the reaction Couples ATP hydrolysis with the unwinding of duplex DNA by translocating in the 3'-5' direction.. The catalysed reaction is ATP + H2O = ADP + phosphate + H(+). Functionally, an ATP-dependent DNA helicase which unwinds DNA in a 3'-5' direction. Plays a role in recombination. In Haemophilus influenzae (strain ATCC 51907 / DSM 11121 / KW20 / Rd), this protein is ATP-dependent DNA helicase RecQ.